Here is a 116-residue protein sequence, read N- to C-terminus: MSVSFPLSKNLHYRPEGNKLNITIGDLKVGSVEFVRETGCLKSECYYPLKWHEELNSWYRCCDNNCEEDHPVPEGVPFPTRINNNIQTLEWFEEKDTDLTQAITRIWNTYQLLQLN.

Belongs to the mimivirus L15/L51/R83 family.

This is an uncharacterized protein from Acanthamoeba polyphaga mimivirus (APMV).